We begin with the raw amino-acid sequence, 406 residues long: Flavohemoprotein (406 aa).

In terms of domain architecture, Globin spans 6 to 144; sequence VLLDKKTTEI…IADIFISVEK (139 aa). H91 contacts heme b. Residues Y101 and E143 each act as charge relay system in the active site. The interval 155-406 is reductase; it reads GGWTGFRDFK…LFGPLEPIAK (252 aa). An FAD-binding FR-type domain is found at 158–267; it reads TGFRDFKVIK…SAPAGDFILD (110 aa). FAD-binding positions include Y196 and 212–215; that span reads RQYS. 280 to 285 serves as a coordination point for NADP(+); that stretch reads GVGLTP. 397–400 is an FAD binding site; sequence LFGP.

The protein belongs to the globin family. Two-domain flavohemoproteins subfamily. This sequence in the C-terminal section; belongs to the flavoprotein pyridine nucleotide cytochrome reductase family. It depends on heme b as a cofactor. The cofactor is FAD.

It catalyses the reaction 2 nitric oxide + NADPH + 2 O2 = 2 nitrate + NADP(+) + H(+). The catalysed reaction is 2 nitric oxide + NADH + 2 O2 = 2 nitrate + NAD(+) + H(+). In terms of biological role, is involved in NO detoxification in an aerobic process, termed nitric oxide dioxygenase (NOD) reaction that utilizes O(2) and NAD(P)H to convert NO to nitrate, which protects the bacterium from various noxious nitrogen compounds. Therefore, plays a central role in the inducible response to nitrosative stress. The chain is Flavohemoprotein from Oceanobacillus iheyensis (strain DSM 14371 / CIP 107618 / JCM 11309 / KCTC 3954 / HTE831).